A 324-amino-acid chain; its full sequence is uncharacterized protein (324 aa).

Helical transmembrane passes span 4–24 (GNKV…PEFM), 63–83 (AALL…EGIL), 106–128 (ALFY…ISFL), 132–151 (WQVQ…SHLL), 179–199 (LADI…AVTL), 209–229 (GLDG…LVIM), 246–266 (LETA…LYTL), and 282–302 (GTWK…GWFM).

This sequence belongs to the TerC family.

It is found in the cell membrane. This is an uncharacterized protein from Bacillus subtilis (strain 168).